Consider the following 238-residue polypeptide: Lipoarabinomannan carrier protein LprG (238 aa).

Positions Met1–Gly26 are cleaved as a signal peptide. A lipid anchor (N-palmitoyl cysteine) is attached at Cys27. Cys27 carries S-diacylglycerol cysteine lipidation.

Belongs to the LppX/LprAFG lipoprotein family. Modified by Lgt on Cys-27 with an S-linked diacylglyceral, signal peptide is removed by LspA, Cys-27 is further modifed with a fatty acid on its amino group by Lnt yielding a triacylated protein. Probably glycosylated, which is required for T-cell activation.

It localises to the cell inner membrane. Its subcellular location is the secreted. The protein localises to the cell wall. In terms of biological role, helps membrane protein ML0556 (P55) transport triacylglycerides (TAG) across the inner cell membrane into the periplasm and probably ultimately to the outer membrane. Binds TAG in its hydrophobic cavity and transfers it between lipid bilayers. TAG probably regulates lipid metabolism and growth regulation and plays a structural role in the outer membrane. Binds di- and triacylated phosphatidyl-myo-inositol mannosides (PIMs), and glycolipid lipoglycan modulins lipoarabinomannan (LAM) and lipomannan (LM), facilitating their recognition by TLR2. Required for activity of drug efflux transporter ML0556. Required, probably with ML0556, for normal surface localization of LAM. Functionally, constitutes a host TLR2 agonist (toll-like receptor) able to stimulate proliferation of CD4+ T-cells derived from a human leprosy patient following protein processing/presentation by MHC class II molecules in peripheral blood mononuclear cells. The sequence is that of Lipoarabinomannan carrier protein LprG from Mycobacterium leprae (strain TN).